We begin with the raw amino-acid sequence, 151 residues long: UPF0178 protein amb2838 (151 aa).

This sequence belongs to the UPF0178 family.

The chain is UPF0178 protein amb2838 from Paramagnetospirillum magneticum (strain ATCC 700264 / AMB-1) (Magnetospirillum magneticum).